The chain runs to 288 residues: MEIIIISGHSGAGKSVALRCLEDIGYYCVDNLPLDLLPQLASILSTNQQSVAISLDIRNLPHSSKTLENLLTEVQQQHQIKLIFLDADRGTLIRRYSDSRRLHPLSTQDLSLEAAIDAERKYLDPLTQHADLIIDTTRLSTHELAERLRDFLCEKSDKALKIIFQSFGFKYGLPLDADYVFDVRFLPNPHWIPELRPLTGLDAPVAEFLNKQNEVNHFIYLTRNYIETWLPMLEQNNRSYLTIAIGCTGGKHRSVYITEQLGEYFQAKGKNVQIQHKSLAKHKKANTQ.

8–15 is a binding site for ATP; it reads GHSGAGKS. GTP is bound at residue 56–59; the sequence is DIRN.

The protein belongs to the RapZ-like family.

In terms of biological role, displays ATPase and GTPase activities. This Pasteurella multocida (strain Pm70) protein is Nucleotide-binding protein PM0169.